We begin with the raw amino-acid sequence, 213 residues long: mRNA-decapping protein OPG121 (213 aa).

N(7)-methyl-GTP contacts are provided by Glu16 and Arg50. The Nudix hydrolase domain occupies 30–209 (KDTHVFAACI…EYLSYIYNIL (180 aa)). Positions 111–132 (GKLDKKESIKDCLRRELKEESD) match the Nudix box motif. Positions 126 and 130 each coordinate Mg(2+). Asp151 contributes to the N(7)-methyl-GTP binding site. Residue Glu183 coordinates Mg(2+).

Belongs to the Nudix hydrolase family. As to quaternary structure, interacts with the late transcription elongation factor VLTF-4/OPG110. Interacts with the late transcription factors VLTF-1. Mg(2+) serves as cofactor. The cofactor is Mn(2+).

It catalyses the reaction a 5'-end (N(7)-methyl 5'-triphosphoguanosine)-guanosine in mRNA + H2O = a 5'-end phospho-guanosine in mRNA + N(7)-methyl-GDP + 2 H(+). Acts with RNA polymerase to initiate transcription from late gene promoters. In Cynomys gunnisoni (Gunnison's prairie dog), this protein is mRNA-decapping protein OPG121 (OPG121).